Consider the following 172-residue polypeptide: Small ribosomal subunit protein uS5 (172 aa).

The region spanning 17 to 80 (LREKMISVNR…EQARRNMFKV (64 aa)) is the S5 DRBM domain.

The protein belongs to the universal ribosomal protein uS5 family. Part of the 30S ribosomal subunit. Contacts proteins S4 and S8.

Its function is as follows. With S4 and S12 plays an important role in translational accuracy. Functionally, located at the back of the 30S subunit body where it stabilizes the conformation of the head with respect to the body. This chain is Small ribosomal subunit protein uS5, found in Paraburkholderia phymatum (strain DSM 17167 / CIP 108236 / LMG 21445 / STM815) (Burkholderia phymatum).